We begin with the raw amino-acid sequence, 264 residues long: tRNA (guanine-N(7)-)-methyltransferase (264 aa).

A disordered region spans residues Met1–Pro39. The segment covering Thr18–Ala31 has biased composition (low complexity). Residues Glu94, Glu119, Asp146, and Asp169 each coordinate S-adenosyl-L-methionine. Asp169 is a catalytic residue. Residues Lys173, Asp205, and Thr240 to Glu243 contribute to the substrate site.

Belongs to the class I-like SAM-binding methyltransferase superfamily. TrmB family.

The enzyme catalyses guanosine(46) in tRNA + S-adenosyl-L-methionine = N(7)-methylguanosine(46) in tRNA + S-adenosyl-L-homocysteine. Its pathway is tRNA modification; N(7)-methylguanine-tRNA biosynthesis. Functionally, catalyzes the formation of N(7)-methylguanine at position 46 (m7G46) in tRNA. This chain is tRNA (guanine-N(7)-)-methyltransferase, found in Burkholderia mallei (strain ATCC 23344).